Here is a 126-residue protein sequence, read N- to C-terminus: Large ribosomal subunit protein bL20c (126 aa).

This sequence belongs to the bacterial ribosomal protein bL20 family.

Its subcellular location is the plastid. The protein resides in the chloroplast. Binds directly to 23S ribosomal RNA and is necessary for the in vitro assembly process of the 50S ribosomal subunit. It is not involved in the protein synthesizing functions of that subunit. In Illicium oligandrum (Star anise), this protein is Large ribosomal subunit protein bL20c.